The chain runs to 418 residues: CinA-like protein (418 aa).

It belongs to the CinA family.

This chain is CinA-like protein, found in Leptospira interrogans serogroup Icterohaemorrhagiae serovar Lai (strain 56601).